Reading from the N-terminus, the 187-residue chain is Elongation factor P (187 aa).

The protein belongs to the elongation factor P family.

Its subcellular location is the cytoplasm. It functions in the pathway protein biosynthesis; polypeptide chain elongation. In terms of biological role, involved in peptide bond synthesis. Stimulates efficient translation and peptide-bond synthesis on native or reconstituted 70S ribosomes in vitro. Probably functions indirectly by altering the affinity of the ribosome for aminoacyl-tRNA, thus increasing their reactivity as acceptors for peptidyl transferase. This Mycobacteroides abscessus (strain ATCC 19977 / DSM 44196 / CCUG 20993 / CIP 104536 / JCM 13569 / NCTC 13031 / TMC 1543 / L948) (Mycobacterium abscessus) protein is Elongation factor P.